A 159-amino-acid chain; its full sequence is Putative pre-16S rRNA nuclease (159 aa).

It belongs to the YqgF nuclease family.

The protein localises to the cytoplasm. Functionally, could be a nuclease involved in processing of the 5'-end of pre-16S rRNA. In Synechococcus sp. (strain JA-3-3Ab) (Cyanobacteria bacterium Yellowstone A-Prime), this protein is Putative pre-16S rRNA nuclease.